The primary structure comprises 429 residues: 3-phosphoshikimate 1-carboxyvinyltransferase (429 aa).

Residues lysine 20, serine 21, and arginine 25 each coordinate 3-phosphoshikimate. Lysine 20 lines the phosphoenolpyruvate pocket. 2 residues coordinate phosphoenolpyruvate: glycine 89 and arginine 118. The 3-phosphoshikimate site is built by serine 164, serine 165, glutamine 166, serine 192, aspartate 311, and lysine 338. Glutamine 166 is a binding site for phosphoenolpyruvate. Aspartate 311 functions as the Proton acceptor in the catalytic mechanism. Positions 342 and 384 each coordinate phosphoenolpyruvate.

Belongs to the EPSP synthase family. In terms of assembly, monomer.

The protein resides in the cytoplasm. The catalysed reaction is 3-phosphoshikimate + phosphoenolpyruvate = 5-O-(1-carboxyvinyl)-3-phosphoshikimate + phosphate. It participates in metabolic intermediate biosynthesis; chorismate biosynthesis. Catalyzes the transfer of the enolpyruvyl moiety of phosphoenolpyruvate (PEP) to the 5-hydroxyl of shikimate-3-phosphate (S3P) to produce enolpyruvyl shikimate-3-phosphate and inorganic phosphate. This Methanococcus vannielii (strain ATCC 35089 / DSM 1224 / JCM 13029 / OCM 148 / SB) protein is 3-phosphoshikimate 1-carboxyvinyltransferase.